We begin with the raw amino-acid sequence, 345 residues long: tRNA dimethylallyltransferase (345 aa).

9–16 (GPTASGKS) serves as a coordination point for ATP. 11–16 (TASGKS) contacts substrate. Interaction with substrate tRNA regions lie at residues 34–37 (DSMQ) and 195–199 (QRMIR).

It belongs to the IPP transferase family. In terms of assembly, monomer. Mg(2+) is required as a cofactor.

The catalysed reaction is adenosine(37) in tRNA + dimethylallyl diphosphate = N(6)-dimethylallyladenosine(37) in tRNA + diphosphate. Its function is as follows. Catalyzes the transfer of a dimethylallyl group onto the adenine at position 37 in tRNAs that read codons beginning with uridine, leading to the formation of N6-(dimethylallyl)adenosine (i(6)A). The chain is tRNA dimethylallyltransferase from Orientia tsutsugamushi (strain Boryong) (Rickettsia tsutsugamushi).